Reading from the N-terminus, the 1705-residue chain is Intersectin-1 (1705 aa).

EH domains follow at residues 21–109 and 220–309; these read ERAK…PVAM and SRLK…SFRR. 2 consecutive EF-hand domains span residues 53–88 and 253–288; these read LPQPVLAQIWALADMNNDGRMDQLEFSIAMKLIKLK and LPQSQLATIWNLSDIDQDGKLTAEEFILAMHLIDVA. Ca(2+)-binding residues include Asp66, Asn68, Asp70, Arg72, Glu77, Asp266, Asp268, Asp270, Lys272, and Glu277. 3 disordered regions span residues 322–355, 386–433, and 668–708; these read VSVDQRLPEEPEEEEPQNADKKLPVTFEDKKREN, RAEQ…ERRE, and RYKF…PPEP. The tract at residues 325–697 is KLERQ; the sequence is DQRLPEEPEE…VEKKPEIQEK (373 aa). The span at 339–355 shows a compositional bias: basic and acidic residues; the sequence is NADKKLPVTFEDKKREN. The stretch at 350–687 forms a coiled coil; that stretch reads DKKRENFERG…KREESIQKCE (338 aa). Over residues 668-699 the composition is skewed to basic and acidic residues; that stretch reads RYKFQDEEKEKREESIQKCEVEKKPEIQEKPN. The 62-residue stretch at 732-793 folds into the SH3 1 domain; the sequence is VKVVYYRALY…PANYAERMPE (62 aa). Positions 823-833 are enriched in low complexity; sequence AFTNTSTNSNN. The disordered stretch occupies residues 823 to 851; sequence AFTNTSTNSNNWADFSSTWPTNNTDKVES. Over residues 834 to 846 the composition is skewed to polar residues; that stretch reads WADFSSTWPTNNT. In terms of domain architecture, SH3 2 spans 897–955; that stretch reads VEGLQAQALYPWRAKKDNHLNFNKNDVITVLEQQDMWWFGEVQGQKGWFPKSYVKLISG. The disordered stretch occupies residues 959–978; sequence KSTSIDSTSSESPASLKRVS. Low complexity predominate over residues 960–973; the sequence is STSIDSTSSESPAS. 3 SH3 domains span residues 986–1044, 1058–1122, and 1139–1198; these read IQGE…PKDS, KKPE…LLSP, and PPTC…LTTD. Residues 1088–1111 carry the Bipartite nuclear localization signal; in isoform 2 motif; that stretch reads RKKNPGGWWEGELQARGKKRQIGW. One can recognise a DH domain in the interval 1221-1407; that stretch reads KRQGYIHELI…EELCSQVNEG (187 aa). The region spanning 1446-1555 is the PH domain; that stretch reads KFLHSGKLYK…WVQKIKAASE (110 aa). The C2 domain maps to 1563-1679; that stretch reads KKREKAYLVR…KKDQGSKGPV (117 aa). Asp1651, Ser1654, and Asp1657 together coordinate Ca(2+).

In terms of assembly, binds epn1 and epn2. It depends on Ca(2+) as a cofactor.

The protein resides in the endomembrane system. It localises to the synapse. The protein localises to the synaptosome. Its subcellular location is the cell projection. It is found in the lamellipodium. The protein resides in the cell membrane. It localises to the membrane. The protein localises to the clathrin-coated pit. Its subcellular location is the recycling endosome. It is found in the cytoplasm. The protein resides in the nucleus envelope. Functionally, adapter protein that provides a link between the endocytic membrane traffic and the actin assembly machinery. Acts as a guanine nucleotide exchange factor (GEF) for cdc42, and thereby stimulates actin nucleation mediated by wasl and the arp2/3 complex. Involved in endocytosis of activated egfr, and probably also other growth factor receptors. In Xenopus laevis (African clawed frog), this protein is Intersectin-1 (itsn1).